We begin with the raw amino-acid sequence, 143 residues long: Large ribosomal subunit protein uL11 (143 aa).

The protein belongs to the universal ribosomal protein uL11 family. In terms of assembly, part of the ribosomal stalk of the 50S ribosomal subunit. Interacts with L10 and the large rRNA to form the base of the stalk. L10 forms an elongated spine to which L12 dimers bind in a sequential fashion forming a multimeric L10(L12)X complex. One or more lysine residues are methylated.

Functionally, forms part of the ribosomal stalk which helps the ribosome interact with GTP-bound translation factors. This chain is Large ribosomal subunit protein uL11, found in Salinispora tropica (strain ATCC BAA-916 / DSM 44818 / JCM 13857 / NBRC 105044 / CNB-440).